A 473-amino-acid chain; its full sequence is Arginine biosynthesis bifunctional protein ArgJ, mitochondrial (473 aa).

The substrate site is built by T201, K230, T241, E328, N468, and T473. T241 (nucleophile) is an active-site residue.

Belongs to the ArgJ family. In terms of assembly, heterodimer of an alpha and a beta chain. The alpha and beta chains are autoproteolytically processed from a single precursor protein within the mitochondrion.

It is found in the mitochondrion matrix. The enzyme catalyses N(2)-acetyl-L-ornithine + L-glutamate = N-acetyl-L-glutamate + L-ornithine. It catalyses the reaction L-glutamate + acetyl-CoA = N-acetyl-L-glutamate + CoA + H(+). Its pathway is amino-acid biosynthesis; L-arginine biosynthesis; L-ornithine and N-acetyl-L-glutamate from L-glutamate and N(2)-acetyl-L-ornithine (cyclic): step 1/1. It participates in amino-acid biosynthesis; L-arginine biosynthesis; N(2)-acetyl-L-ornithine from L-glutamate: step 1/4. Functionally, catalyzes two activities which are involved in the cyclic version of arginine biosynthesis: the synthesis of acetylglutamate from glutamate and acetyl-CoA, and of ornithine by transacetylation between acetylornithine and glutamate. This chain is Arginine biosynthesis bifunctional protein ArgJ, mitochondrial, found in Ajellomyces capsulatus (strain G186AR / H82 / ATCC MYA-2454 / RMSCC 2432) (Darling's disease fungus).